Consider the following 187-residue polypeptide: Elongation factor P (187 aa).

This sequence belongs to the elongation factor P family.

The protein localises to the cytoplasm. It participates in protein biosynthesis; polypeptide chain elongation. Functionally, involved in peptide bond synthesis. Stimulates efficient translation and peptide-bond synthesis on native or reconstituted 70S ribosomes in vitro. Probably functions indirectly by altering the affinity of the ribosome for aminoacyl-tRNA, thus increasing their reactivity as acceptors for peptidyl transferase. The protein is Elongation factor P of Mycolicibacterium gilvum (strain PYR-GCK) (Mycobacterium gilvum (strain PYR-GCK)).